Consider the following 432-residue polypeptide: Acyl-coenzyme A thioesterase 3 (432 aa).

Catalysis depends on charge relay system residues S243, D337, and H371. Positions 430–432 (AKL) match the Microbody targeting signal motif.

The protein belongs to the C/M/P thioester hydrolase family. Widely expressed. Highly expressed in the kidney, expressed at low level in the liver. Isoform 2 is expressed in the kidney, but not in the liver. Isoform 1 is liver-specific. Highly expressed in kidney (at protein level).

It is found in the peroxisome. It catalyses the reaction hexadecanoyl-CoA + H2O = hexadecanoate + CoA + H(+). It carries out the reaction decanoyl-CoA + H2O = decanoate + CoA + H(+). The enzyme catalyses dodecanoyl-CoA + H2O = dodecanoate + CoA + H(+). The catalysed reaction is tetradecanoyl-CoA + H2O = tetradecanoate + CoA + H(+). It catalyses the reaction octadecanoyl-CoA + H2O = octadecanoate + CoA + H(+). It carries out the reaction eicosanoyl-CoA + H2O = eicosanoate + CoA + H(+). The enzyme catalyses (9Z)-octadecenoyl-CoA + H2O = (9Z)-octadecenoate + CoA + H(+). The catalysed reaction is (9Z,12Z)-octadecadienoyl-CoA + H2O = (9Z,12Z)-octadecadienoate + CoA + H(+). It catalyses the reaction (5Z,8Z,11Z,14Z)-eicosatetraenoyl-CoA + H2O = (5Z,8Z,11Z,14Z)-eicosatetraenoate + CoA + H(+). It carries out the reaction tetracosanoyl-CoA + H2O = tetracosanoate + CoA + H(+). The enzyme catalyses hexacosanoyl-CoA + H2O = hexacosanoate + CoA + H(+). The catalysed reaction is docosanoyl-CoA + H2O = docosanoate + CoA + H(+). It catalyses the reaction (9Z)-hexadecenoyl-CoA + H2O = (9Z)-hexadecenoate + CoA + H(+). It functions in the pathway lipid metabolism; fatty acid metabolism. Functionally, catalyzes the hydrolysis of acyl-CoAs into free fatty acids and coenzyme A (CoASH), regulating their respective intracellular levels. Mainly active on long-chain acyl-CoAs. May have a function in termination of beta-oxidation of fatty acids. This chain is Acyl-coenzyme A thioesterase 3 (Acot3), found in Mus musculus (Mouse).